Reading from the N-terminus, the 154-residue chain is Cold shock domain-containing protein C2 (154 aa).

Disordered stretches follow at residues 1-22 and 36-62; these read MTSESTSPPVVPPLHSPKSPVW and ERGGGVSPRDLPSPLPTKRTRTYSATA. S19 bears the Phosphoserine mark. One can recognise a CSD domain in the interval 69 to 136; the sequence is VFKGVCKQFS…KFQAVEVVLT (68 aa).

As to expression, brain-specific. Expression restricted to the pyramidal neurons of the cerebral cortex and in the Purkinje cells of the cerebellum.

The protein resides in the nucleus. It localises to the cytoplasm. RNA-binding factor which binds specifically to the very 3'-UTR ends of both histone H1 and H3.3 mRNAs, encompassing the polyadenylation signal. Might play a central role in the negative regulation of histone variant synthesis in the developing brain. In Rattus norvegicus (Rat), this protein is Cold shock domain-containing protein C2 (Csdc2).